The sequence spans 663 residues: Transcriptional repressor CTCFL (663 aa).

Residues 24–51 are compositionally biased toward basic and acidic residues; that stretch reads EKGLKEEEKDGVCREKDHRSPSELEAER. 2 disordered regions span residues 24–55 and 221–250; these read EKGLKEEEKDGVCREKDHRSPSELEAERTSGA and NSNVEEQEDQPTAGQADAEKAKSTKNQRKT. C2H2-type zinc fingers lie at residues 257–279, 285–307, 313–336, 342–364, 370–392, 398–421, 428–451, 458–480, 486–508, and 514–537; these read FHCDVCMFTSSRMSSFNRHMKTH, HLCHLCLKTFRTVTLLRNHVNTH, YKCNDCNMAFVTSGELVRHRRYKH, FKCSMCKYASVEASKLKRHVRSH, FQCCQCSYASRDTYKLKRHMRTH, YECHICHTRFTQSGTMKIHILQKH, YQCPHCATIIARKSDLRVHMRNLH, LKCRYCSAVFHERYALIQHQKTH, FKCKHCSYACKQERHMTAHIRTH, and FTCLSCNKCFRQKQLLNAHFRKYH. The segment at 546 to 568 adopts a C2H2-type 11; atypical zinc-finger fold; sequence YKCSKCGKGFSRWINLHRHSEKC. The tract at residues 569–630 is disordered; the sequence is GSGEAKSAAS…STTKGEQFPG (62 aa). Residues 580 to 590 are compositionally biased toward basic residues; it reads KGRRTRKRKQT. The segment covering 594-607 has biased composition (basic and acidic residues); sequence EATKGQKEAAKGWK. A compositionally biased stretch (low complexity) spans 608 to 620; the sequence is EAANGDEAAAEEA.

It belongs to the CTCF zinc-finger protein family. In terms of assembly, interacts with histones, PRMT7 and SETD1A. Interacts (via N-terminus) with BAG6/BAT3. As to expression, testis specific. Specifically expressed in primary spermatocytes.

Its subcellular location is the cytoplasm. It is found in the nucleus. Testis-specific DNA binding protein responsible for insulator function, nuclear architecture and transcriptional control, which probably acts by recruiting epigenetic chromatin modifiers. Plays a key role in gene imprinting in male germline, by participating in the establishment of differential methylation at the IGF2/H19 imprinted control region (ICR). Directly binds the unmethylated H19 ICR and recruits the PRMT7 methyltransferase, leading to methylate histone H4 'Arg-3' to form H4R3sme2. This probably leads to recruit de novo DNA methyltransferases at these sites. Seems to act as tumor suppressor. In association with DNMT1 and DNMT3B, involved in activation of BAG1 gene expression by binding to its promoter. Required for dimethylation of H3 lysine 4 (H3K4me2) of MYC and BRCA1 promoters. The sequence is that of Transcriptional repressor CTCFL (CTCFL) from Homo sapiens (Human).